The primary structure comprises 239 residues: Small ribosomal subunit protein eS6A (239 aa).

Ser235 and Ser236 each carry phosphoserine.

It belongs to the eukaryotic ribosomal protein eS6 family. Component of the small ribosomal subunit (SSU). Mature yeast ribosomes consist of a small (40S) and a large (60S) subunit. The 40S small subunit contains 1 molecule of ribosomal RNA (18S rRNA) and at least 33 different proteins. The large 60S subunit contains 3 rRNA molecules (25S, 5.8S and 5S rRNA) and at least 46 different proteins. Interacts with snoRNA U3. uS11 interacts with MPP10. Component of the ribosomal small subunit (SSU) processome composed of at least 40 protein subunits and snoRNA U3. In terms of processing, phosphorylated.

It is found in the cytoplasm. In terms of biological role, component of the ribosome, a large ribonucleoprotein complex responsible for the synthesis of proteins in the cell. The small ribosomal subunit (SSU) binds messenger RNAs (mRNAs) and translates the encoded message by selecting cognate aminoacyl-transfer RNA (tRNA) molecules. The large subunit (LSU) contains the ribosomal catalytic site termed the peptidyl transferase center (PTC), which catalyzes the formation of peptide bonds, thereby polymerizing the amino acids delivered by tRNAs into a polypeptide chain. The nascent polypeptides leave the ribosome through a tunnel in the LSU and interact with protein factors that function in enzymatic processing, targeting, and the membrane insertion of nascent chains at the exit of the ribosomal tunnel. eS6 is involved in nucleolar processing of pre-18S ribosomal RNA and ribosome assembly. This is Small ribosomal subunit protein eS6A (rps601) from Schizosaccharomyces pombe (strain 972 / ATCC 24843) (Fission yeast).